Consider the following 77-residue polypeptide: UPF0291 protein EAT1b_0405 (77 aa).

Residues 53-77 (KVVDPDGNDVTPEKLKEDQKRYRGE) are disordered. Positions 63-77 (TPEKLKEDQKRYRGE) are enriched in basic and acidic residues.

This sequence belongs to the UPF0291 family.

The protein resides in the cytoplasm. This Exiguobacterium sp. (strain ATCC BAA-1283 / AT1b) protein is UPF0291 protein EAT1b_0405.